The primary structure comprises 458 residues: tRNA-2-methylthio-N(6)-dimethylallyladenosine synthase (458 aa).

Residues 15–134 enclose the MTTase N-terminal domain; that stretch reads KKVFIKTYGC…LPDLLEQTKQ (120 aa). Positions 24, 60, 97, 175, 179, and 182 each coordinate [4Fe-4S] cluster. One can recognise a Radical SAM core domain in the interval 161–393; sequence RKRGVSAFLT…QVLLLEQQNA (233 aa). The TRAM domain maps to 396 to 457; it reads RSKIGQTTDV…SNSFVGEMTN (62 aa).

Belongs to the methylthiotransferase family. MiaB subfamily. Monomer. [4Fe-4S] cluster is required as a cofactor.

It localises to the cytoplasm. The enzyme catalyses N(6)-dimethylallyladenosine(37) in tRNA + (sulfur carrier)-SH + AH2 + 2 S-adenosyl-L-methionine = 2-methylsulfanyl-N(6)-dimethylallyladenosine(37) in tRNA + (sulfur carrier)-H + 5'-deoxyadenosine + L-methionine + A + S-adenosyl-L-homocysteine + 2 H(+). In terms of biological role, catalyzes the methylthiolation of N6-(dimethylallyl)adenosine (i(6)A), leading to the formation of 2-methylthio-N6-(dimethylallyl)adenosine (ms(2)i(6)A) at position 37 in tRNAs that read codons beginning with uridine. The protein is tRNA-2-methylthio-N(6)-dimethylallyladenosine synthase of Bartonella henselae (strain ATCC 49882 / DSM 28221 / CCUG 30454 / Houston 1) (Rochalimaea henselae).